The primary structure comprises 249 residues: Putative TrmH family tRNA/rRNA methyltransferase YacO (249 aa).

The S-adenosyl-L-methionine site is built by Gly-198, Leu-218, and Leu-227.

The protein belongs to the class IV-like SAM-binding methyltransferase superfamily. RNA methyltransferase TrmH family.

This is Putative TrmH family tRNA/rRNA methyltransferase YacO (yacO) from Bacillus subtilis (strain 168).